We begin with the raw amino-acid sequence, 38 residues long: Very early lactation protein (38 aa).

In terms of assembly, homodimer. Post-translationally, O-glycosylated. Contains sialic acid residues. In terms of tissue distribution, found in the whey fraction of milk (at protein level).

It is found in the secreted. In Trichosurus vulpecula (Brush-tailed possum), this protein is Very early lactation protein.